A 193-amino-acid polypeptide reads, in one-letter code: Outer membrane lipoprotein DolP (193 aa).

Positions 1-21 are cleaved as a signal peptide; sequence MTLSPLKKLAILLGATIFLQG. The N-palmitoyl cysteine moiety is linked to residue cysteine 22. The S-diacylglycerol cysteine moiety is linked to residue cysteine 22. 2 BON domains span residues 48–117 and 126–193; these read DDET…TVSP and KDSW…KYLD.

Belongs to the lipoprotein DolP family.

The protein resides in the cell outer membrane. Functionally, plays an important role in maintaining outer membrane integrity. The polypeptide is Outer membrane lipoprotein DolP (Haemophilus influenzae (strain ATCC 51907 / DSM 11121 / KW20 / Rd)).